The chain runs to 57 residues: Kunitz-type serine protease inhibitor homolog delta-dendrotoxin (57 aa).

The BPTI/Kunitz inhibitor domain maps to cysteine 5 to cysteine 55. 3 disulfide bridges follow: cysteine 5–cysteine 55, cysteine 14–cysteine 38, and cysteine 30–cysteine 51.

The protein belongs to the venom Kunitz-type family. As to expression, expressed by the venom gland.

The protein resides in the secreted. Its function is as follows. Serine protease inhibitor homolog that blocks voltage-gated potassium channels (Kv). The chain is Kunitz-type serine protease inhibitor homolog delta-dendrotoxin from Dendroaspis angusticeps (Eastern green mamba).